A 692-amino-acid polypeptide reads, in one-letter code: Elongation factor G (692 aa).

In terms of domain architecture, tr-type G spans 8-283; that stretch reads QDLRNIGIVA…AVVDYLPSPL (276 aa). Residues 17–24, 81–85, and 135–138 each bind GTP; these read AHIDAGKT, DTPGH, and NKLD.

This sequence belongs to the TRAFAC class translation factor GTPase superfamily. Classic translation factor GTPase family. EF-G/EF-2 subfamily.

The protein resides in the cytoplasm. In terms of biological role, catalyzes the GTP-dependent ribosomal translocation step during translation elongation. During this step, the ribosome changes from the pre-translocational (PRE) to the post-translocational (POST) state as the newly formed A-site-bound peptidyl-tRNA and P-site-bound deacylated tRNA move to the P and E sites, respectively. Catalyzes the coordinated movement of the two tRNA molecules, the mRNA and conformational changes in the ribosome. This is Elongation factor G from Hydrogenobaculum sp. (strain Y04AAS1).